The sequence spans 83 residues: Cytochrome b559 subunit alpha (83 aa).

Residues V21 to W35 traverse the membrane as a helical segment. Residue H23 coordinates heme.

This sequence belongs to the PsbE/PsbF family. As to quaternary structure, heterodimer of an alpha subunit and a beta subunit. PSII is composed of 1 copy each of membrane proteins PsbA, PsbB, PsbC, PsbD, PsbE, PsbF, PsbH, PsbI, PsbJ, PsbK, PsbL, PsbM, PsbT, PsbX, PsbY, PsbZ, Psb30/Ycf12, at least 3 peripheral proteins of the oxygen-evolving complex and a large number of cofactors. It forms dimeric complexes. It depends on heme b as a cofactor.

The protein localises to the plastid. It is found in the chloroplast thylakoid membrane. Its function is as follows. This b-type cytochrome is tightly associated with the reaction center of photosystem II (PSII). PSII is a light-driven water:plastoquinone oxidoreductase that uses light energy to abstract electrons from H(2)O, generating O(2) and a proton gradient subsequently used for ATP formation. It consists of a core antenna complex that captures photons, and an electron transfer chain that converts photonic excitation into a charge separation. This is Cytochrome b559 subunit alpha from Adiantum capillus-veneris (Maidenhair fern).